The primary structure comprises 337 residues: Inositol 2-dehydrogenase (337 aa).

It belongs to the Gfo/Idh/MocA family. As to quaternary structure, homotetramer.

It catalyses the reaction myo-inositol + NAD(+) = scyllo-inosose + NADH + H(+). In terms of biological role, involved in the oxidation of myo-inositol (MI) to 2-keto-myo-inositol (2KMI or 2-inosose). This Klebsiella pneumoniae subsp. pneumoniae (strain ATCC 700721 / MGH 78578) protein is Inositol 2-dehydrogenase.